A 494-amino-acid chain; its full sequence is Glutamyl-tRNA(Gln) amidotransferase subunit A (494 aa).

Residues Lys72 and Ser147 each act as charge relay system in the active site. Catalysis depends on Ser171, which acts as the Acyl-ester intermediate.

Belongs to the amidase family. GatA subfamily. As to quaternary structure, heterotrimer of A, B and C subunits.

The enzyme catalyses L-glutamyl-tRNA(Gln) + L-glutamine + ATP + H2O = L-glutaminyl-tRNA(Gln) + L-glutamate + ADP + phosphate + H(+). In terms of biological role, allows the formation of correctly charged Gln-tRNA(Gln) through the transamidation of misacylated Glu-tRNA(Gln) in organisms which lack glutaminyl-tRNA synthetase. The reaction takes place in the presence of glutamine and ATP through an activated gamma-phospho-Glu-tRNA(Gln). In Methylacidiphilum infernorum (isolate V4) (Methylokorus infernorum (strain V4)), this protein is Glutamyl-tRNA(Gln) amidotransferase subunit A.